The following is a 126-amino-acid chain: Chorion class B protein M1768 (126 aa).

The interval 1-17 (YGGLGYGGLGGGCGRGF) is left arm. The segment at 18–86 (SGGGLPVATA…GNGAVGITRE (69 aa)) is central domain. Residues 87–126 (GGFGYGAGYGDGYGLGFGGYGGGYGLGYGGYGGCGCSWGY) form a right arm (Gly-rich tandem repeats) region.

It belongs to the chorion protein family.

Its function is as follows. This protein is one of many from the eggshell of the silk moth. This Bombyx mori (Silk moth) protein is Chorion class B protein M1768.